A 299-amino-acid polypeptide reads, in one-letter code: DNA-binding transcriptional activator HetR (299 aa).

The segment at 1–98 is DNA-binding domain; the sequence is MSNDIDLIKR…GKLLKTLGSQ (98 aa). DNA is bound by residues 34-40 and 60-76; these read RHGAFLD and NLRM…KRVK. The interval 99–216 is flap domain; sequence EPRYLIQFPY…FYALTRPFYA (118 aa). The active site involves serine 152. 179 to 181 is a binding site for DNA; that stretch reads SEA. The interval 217–299 is hood domain; sequence PADDQERTYI…LQMVFGRKED (83 aa).

It belongs to the peptidase S48 family. As to quaternary structure, upon expression in E.coli most protein is monomeric, although varying amounts of homodimer can be seen. Homodimer; disulfide-linked. Homodimer. Binds the 6 residue C-terminal peptide of PatS; one peptide binds to each subunit. In bacterial two-hybrid assays interacts robustly with itself, Alr2902 and Alr3234 and more weakly with Als1930. Post-translationally, probably autodegrades.

Protease activity is inhibited by PMSF, suggesting this is a serine protease. Its function is as follows. Controls heterocyst differentiation. Dimerization is required for DNA-binding. Has both a protease and a DNA-binding activity. In terms of biological role, controls heterocyst differentiation; increased expression leads to more heterocysts than usual. Has protease activity. Binds the promoter regions of hetR, hepA and patS and is required for their expression. Dimerization is required for DNA-binding, DNA-binding is inhibited by the PatS6 peptide. Binds the inverted repeat 5'-GTAGGCGAGGGGTCTAACCCCTCATTACC-3' found in the hetP promoter, required for expression of hetP. The protein is DNA-binding transcriptional activator HetR of Nostoc sp. (strain PCC 7120 / SAG 25.82 / UTEX 2576).